Here is a 254-residue protein sequence, read N- to C-terminus: Large ribosomal subunit protein uL4 (254 aa).

Belongs to the universal ribosomal protein uL4 family. Part of the 50S ribosomal subunit.

One of the primary rRNA binding proteins, this protein initially binds near the 5'-end of the 23S rRNA. It is important during the early stages of 50S assembly. It makes multiple contacts with different domains of the 23S rRNA in the assembled 50S subunit and ribosome. Its function is as follows. Forms part of the polypeptide exit tunnel. The sequence is that of Large ribosomal subunit protein uL4 from Methanothermobacter thermautotrophicus (strain ATCC 29096 / DSM 1053 / JCM 10044 / NBRC 100330 / Delta H) (Methanobacterium thermoautotrophicum).